The chain runs to 535 residues: UDP-glucuronosyltransferase 1A1 (535 aa).

A signal peptide spans 1-29 (MTVVCWSSRLLLLLPYLLLCVFGPSASHA). Residues N89, N297, and N435 are each glycosylated (N-linked (GlcNAc...) asparagine). A helical transmembrane segment spans residues 493–509 (VIGFLLAIVLTVVFIVF).

This sequence belongs to the UDP-glycosyltransferase family. Homodimers. Homooligomer. Interacts with UGT1A3, UGT1A4, UGT1A6, UGT1A7, UGT1A8, UGT1A9 and UGT1A10 to form heterodimers. In terms of tissue distribution, highly expressed in liver and at lower levels in colon, kidney, stomach and intestine.

Its subcellular location is the endoplasmic reticulum membrane. It catalyses the reaction glucuronate acceptor + UDP-alpha-D-glucuronate = acceptor beta-D-glucuronoside + UDP + H(+). The enzyme catalyses 17beta-estradiol + UDP-alpha-D-glucuronate = 17beta-estradiol 3-O-(beta-D-glucuronate) + UDP + H(+). It carries out the reaction 2-hydroxyestrone + UDP-alpha-D-glucuronate = 2-hydroxyestrone 3-O-(beta-D-glucuronate) + UDP + H(+). The catalysed reaction is 2-hydroxy-17beta-estradiol + UDP-alpha-D-glucuronate = 2-hydroxy-17beta-estradiol 3-O-(beta-D-glucuronate) + UDP + H(+). It catalyses the reaction 2-methoxy-17beta-estradiol + UDP-alpha-D-glucuronate = 2-methoxy-17beta-estradiol 3-O-(beta-D-glucuronate) + UDP + H(+). The enzyme catalyses 17alpha-estradiol + UDP-alpha-D-glucuronate = 17alpha-estradiol 3-O-(beta-D-glucuronate) + UDP + H(+). It carries out the reaction 16beta,17beta-estriol + UDP-alpha-D-glucuronate = 16beta,17beta-estriol 16-O-(beta-D-glucuronate) + UDP + H(+). The catalysed reaction is losartan + UDP-alpha-D-glucuronate = losartan-2-N-beta-D-glucuronide + UDP. It catalyses the reaction prunetin + UDP-alpha-D-glucuronate = prunetin-4'-O-beta-D-glucuronide + UDP. The enzyme catalyses SN-38 + UDP-alpha-D-glucuronate = SN-38 O-beta-D-glucuronide + UDP + H(+). It carries out the reaction (4Z,15Z)-bilirubin IXalpha + UDP-alpha-D-glucuronate = (4Z,15Z)-bilirubin IXalpha C12-beta-D-glucuronoside + UDP. The catalysed reaction is (4Z,15Z)-bilirubin IXalpha + UDP-alpha-D-glucuronate = (4Z,15Z)-bilirubin IXalpha C8-beta-D-glucuronoside + UDP. It catalyses the reaction (4Z,15Z)-bilirubin IXalpha C8-beta-D-glucuronoside + UDP-alpha-D-glucuronate = (4Z,15Z)-bilirubin IXalpha C8,C12-beta-D-bisglucuronoside + UDP. The enzyme catalyses (4Z,15Z)-bilirubin IXalpha C12-beta-D-glucuronoside + UDP-alpha-D-glucuronate = (4Z,15Z)-bilirubin IXalpha C8,C12-beta-D-bisglucuronoside + UDP. It carries out the reaction 8-iso-prostaglandin F2alpha + UDP-alpha-D-glucuronate = 8-iso-prostaglandin F2alpha-glucuronide + UDP + H(+). The catalysed reaction is (5Z,8Z,11Z,14Z)-eicosatetraenoate + UDP-alpha-D-glucuronate = O-[(5Z),(8Z),(11Z),(14Z)-eicosatetraenoyl]-beta-D-glucuronate + UDP. It catalyses the reaction 15-hydroxy-(5Z,8Z,11Z,13E)-eicosatetraenoate + UDP-alpha-D-glucuronate = 15-O-(beta-D-glucuronosyl)-(5Z,8Z,11Z,14Z)-eicosatetraenoate + UDP + H(+). The enzyme catalyses 20-hydroxy-(5Z,8Z,11Z,14Z)-eicosatetraenoate + UDP-alpha-D-glucuronate = 20-O-(beta-D-glucuronosyl)-(5Z,8Z,11Z,14Z)-eicosatetraenoate + UDP + H(+). It carries out the reaction prostaglandin B1 + UDP-alpha-D-glucuronate = 15-O-(beta-D-glucuronosyl)-prostaglandin B1 + UDP + H(+). The catalysed reaction is (E)-ferulate + UDP-alpha-D-glucuronate = (E)-4-O-(beta-D-glucuronosyl)-ferulate + UDP + H(+). It catalyses the reaction (E)-ferulate + UDP-alpha-D-glucuronate = (E)-ferulic acid beta-D-glucuronate ester + UDP. Functionally, UDP-glucuronosyltransferase (UGT) that catalyzes phase II biotransformation reactions in which lipophilic substrates are conjugated with glucuronic acid to increase the metabolite's water solubility, thereby facilitating excretion into either the urine or bile. Essential for the elimination and detoxification of drugs, xenobiotics and endogenous compounds. Catalyzes the glucuronidation of endogenous estrogen hormones such as estradiol, estrone and estriol. Involved in the glucuronidation of bilirubin, a degradation product occurring in the normal catabolic pathway that breaks down heme in vertebrates. Involved in the glucuronidation of arachidonic acid (AA) and AA-derived eicosanoids including 15-HETE, 20-HETE, PGB1 and F2-isoprostane (8-iso-PGF2alpha). Involved in the glucuronidation of the phytochemical ferulic acid at the phenolic or the carboxylic acid group. Also catalyzes the glucuronidation the isoflavones genistein, daidzein, glycitein, formononetin, biochanin A and prunetin, which are phytoestrogens with anticancer and cardiovascular properties. Involved in the glucuronidation of the AGTR1 angiotensin receptor antagonist losartan, a drug which can inhibit the effect of angiotensin II. Involved in the biotransformation of 7-ethyl-10-hydroxycamptothecin (SN-38), the pharmacologically active metabolite of the anticancer drug irinotecan. This is UDP-glucuronosyltransferase 1A1 from Mus musculus (Mouse).